Consider the following 776-residue polypeptide: Cullin-1 (776 aa).

At arginine 63 the chain carries Omega-N-methylarginine. The Cullin neddylation domain maps to aspartate 706–aspartate 766. A Glycyl lysine isopeptide (Lys-Gly) (interchain with G-Cter in NEDD8) cross-link involves residue lysine 720.

It belongs to the cullin family. Component of multiple Cul1-RING E3 ubiquitin-protein ligase complexes commonly known as SCF (SKP1-CUL1-F-box) complexes, consisting of CUL1, SKP1, RBX1 and a variable F-box domain-containing protein as substrate-specific subunit. Component of the SCF(FBXW11) complex containing FBXW11. Component of the SCF(SKP2) complex containing SKP2, in which it interacts directly with SKP1, SKP2 and RBX1. Component of the SCF(FBXW2) complex containing FBXW2. Component of the SCF(FBXO32) complex containing FBXO32. Component of the probable SCF(FBXO7) complex containing FBXO7. Component of the SCF(FBXO10) complex containing FBXO10. Component of the SCF(FBXO11) complex containing FBXO11. Component of the SCF(FBXO25) complex containing FBXO25. Component of the SCF(FBXO33) complex containing FBXO33. Component of the probable SCF(FBXO4) complex containing FBXO4. Component of the SCF(FBXO44) complex, composed of SKP1, CUL1 and FBXO44. Component of the SCF(BTRC) complex, composed of SKP1, CUL1 and BTRC. This complex binds phosphorylated NFKBIA. Part of a SCF complex consisting of CUL1, RBX1, SKP1 and FBXO2. Component of a SCF(SKP2)-like complex containing CUL1, SKP1, TRIM21 and SKP2. Component of the SCF(FBXO17) complex, composed of SKP1, CUL1 and FBXO17. Component of the SCF(FBXO27) complex, composed of SKP1, CUL1 and FBXO27. Component of the SCF(CCNF) complex consisting of CUL1, RBX1, SKP1 and CCNF. Interacts with CCNF. Component of the SCF(FBXL3) complex composed of CUL1, SKP1, RBX1 and FBXL3. Component of the SCF(FBXL21) complex composed of CUL1, SKP1, RBX1 and FBXL21. Component of the SCF(FBXO9) composed of CUL1, SKP1, RBX1 and FBXO9. Component of the SCF(FBXW7) composed of CUL1, SKP1, RBX1 and FBXW7. Component of the SCF(FBXO31) complex composed of CUL1, SKP1, RBX1 and FBXO31. Interacts with CHEK2; mediates CHEK2 ubiquitination and regulates its function. Part of a complex with TIP120A/CAND1 and RBX1. The unneddylated form interacts with TIP120A/CAND1 and the interaction mediates the exchange of the F-box substrate-specific subunit. Can self-associate. Interacts with FBXW8. Interacts with RNF7. Interacts with TRIM21. Interacts with COPS2. Interacts with UBE2M. Identified in a complex with RBX1 and GLMN. Interacts with CEP68 as part of the SCF(FBXW11) complex; the interaction is probably mediated by FBXW11 and the complex also contains CDK5RAP2 and PCNT. Interacts (when neddylated) with ARIH1; leading to activate the E3 ligase activity of ARIH1. Interacts with COPS9 isoform 2. Interacts with UBXN1. Interacts with KAT7, probably as part of an SCF complex; the interaction mediates KAT7 ubiquitination. Interacts with NOTCH2. Part of a complex that contains DCUN1D5, CUL1 and RBX1; this complex is bridged by CUL1. Interacts (unneddylated form) with DCUN1D1, DCUN1D2, DCUN1D3, DCUN1D4 and DCUN1D5; these interactions promote the cullin neddylation. Interacts (via the C-terminal domain) with CUL7; the interaction seems to be mediated by FBXW8; it is likely specific to FBXW8, but not other F-box proteins. Interacts with UBR2, as part of SCF(BTRC) complex; the interaction mediates 'Lys-48'-linked ubiquitination of UBR2 and is regulated by DUSP22 in the T-cell receptor signaling pathway. As to quaternary structure, (Microbial infection) Interacts with Epstein-Barr virus BPLF1. In terms of assembly, (Microbial infection) Interacts with Human adenovirus early E1A protein; this interaction inhibits RBX1-CUL1-dependent elongation reaction of ubiquitin chains by the SCF(FBXW7) complex. (Microbial infection) Interacts with vaccinia virus protein C9L. As to quaternary structure, (Microbial infection) Interacts with Epstein-Barr virus (EBV) tegument protein BGLF2; this interaction might facilitate CUL1 recruitment to STAT2, leading to ubiquitination and degradation of the latter. Neddylated; which enhances the ubiquitination activity of SCF. Neddylation prevents binding of the inhibitor CAND1. Neddylation leads to structural rearrangment in the complex that allows interaction between the E2 ubiquitin-conjugating enzyme and the acceptor ubiquitin. Deneddylated via its interaction with the COP9 signalosome (CSN) complex. In terms of processing, (Microbial infection) Deneddylated by Epstein-Barr virus BPLF1 leading to a S-phase-like environment that is required for efficient replication of the viral genome. As to expression, expressed in lung fibroblasts.

It participates in protein modification; protein ubiquitination. In terms of biological role, core component of multiple cullin-RING-based SCF (SKP1-CUL1-F-box protein) E3 ubiquitin-protein ligase complexes, which mediate the ubiquitination of proteins involved in cell cycle progression, signal transduction and transcription. SCF complexes and ARIH1 collaborate in tandem to mediate ubiquitination of target proteins. In the SCF complex, serves as a rigid scaffold that organizes the SKP1-F-box protein and RBX1 subunits. May contribute to catalysis through positioning of the substrate and the ubiquitin-conjugating enzyme. The E3 ubiquitin-protein ligase activity of the complex is dependent on the neddylation of the cullin subunit and exchange of the substrate recognition component is mediated by TIP120A/CAND1. The functional specificity of the SCF complex depends on the F-box protein as substrate recognition component. SCF(BTRC) and SCF(FBXW11) direct ubiquitination of CTNNB1 and participate in Wnt signaling. SCF(FBXW11) directs ubiquitination of phosphorylated NFKBIA. SCF(BTRC) directs ubiquitination of NFKBIB, NFKBIE, ATF4, SMAD3, SMAD4, CDC25A, FBXO5 and probably NFKB2. SCF(BTRC) and/or SCF(FBXW11) direct ubiquitination of CEP68. SCF(SKP2) directs ubiquitination of phosphorylated CDKN1B/p27kip and is involved in regulation of G1/S transition. SCF(SKP2) directs ubiquitination of ORC1, CDT1, RBL2, ELF4, CDKN1A, RAG2, FOXO1A, and probably MYC and TAL1. SCF(FBXW7) directs ubiquitination of CCNE1, NOTCH1 released notch intracellular domain (NICD), and probably PSEN1. SCF(FBXW2) directs ubiquitination of GCM1. SCF(FBXO32) directs ubiquitination of MYOD1. SCF(FBXO7) directs ubiquitination of BIRC2 and DLGAP5. SCF(FBXO33) directs ubiquitination of YBX1. SCF(FBXO1) directs ubiquitination of BCL6 and DTL but does not seem to direct ubiquitination of TP53. SCF(BTRC) mediates the ubiquitination of NFKBIA at 'Lys-21' and 'Lys-22'; the degradation frees the associated NFKB1-RELA dimer to translocate into the nucleus and to activate transcription. SCF(CCNF) directs ubiquitination of CCP110. SCF(FBXL3) and SCF(FBXL21) direct ubiquitination of CRY1 and CRY2. SCF(FBXO9) directs ubiquitination of TTI1 and TELO2. SCF(FBXO10) directs ubiquitination of BCL2. Neddylated CUL1-RBX1 ubiquitinates p53/TP53 recruited by Cul7-RING(FBXW8) complex. SCF(BTRC) directs 'Lys-48'-linked ubiquitination of UBR2 in the T-cell receptor signaling pathway. The SCF(FBXO31) protein ligase complex specifically mediates the ubiquitination of proteins amidated at their C-terminus in response to oxidative stress. In Homo sapiens (Human), this protein is Cullin-1 (CUL1).